We begin with the raw amino-acid sequence, 221 residues long: GTP cyclohydrolase III (221 aa).

It belongs to the archaeal-type GTP cyclohydrolase family.

The enzyme catalyses GTP + 3 H2O = 2-amino-5-formylamino-6-(5-phospho-D-ribosylamino)pyrimidin-4(3H)-one + 2 phosphate + 2 H(+). Catalyzes the formation of 2-amino-5-formylamino-6-ribofuranosylamino-4(3H)-pyrimidinone ribonucleotide monophosphate and inorganic phosphate from GTP. Also has an independent pyrophosphate phosphohydrolase activity. The polypeptide is GTP cyclohydrolase III (Pyrobaculum islandicum (strain DSM 4184 / JCM 9189 / GEO3)).